Here is a 278-residue protein sequence, read N- to C-terminus: Prohibitin-7, mitochondrial (278 aa).

Over 1–14 the chain is Mitochondrial matrix; the sequence is MNVKKVPNVPGSPA. Residues 15–37 traverse the membrane as a helical; Signal-anchor for type II membrane protein segment; the sequence is LSALLKLGVIGGLGLYCIGSSMY. Over 38–278 the chain is Mitochondrial intermembrane; the sequence is NVDGGHRAIV…NSSDLLISKQ (241 aa). Residues 186–220 adopt a coiled-coil conformation; that stretch reads KEFTEAIEKKQVAAQEAERAKFIVEKAEQDKKSAI.

The protein belongs to the prohibitin family. In terms of assembly, component of a prohibitin multimeric complex in mitochondrial membranes.

The protein localises to the mitochondrion inner membrane. In terms of biological role, prohibitin probably acts as a holdase/unfoldase for the stabilization of newly synthesized mitochondrial proteins. The chain is Prohibitin-7, mitochondrial (PHB7) from Arabidopsis thaliana (Mouse-ear cress).